The following is a 277-amino-acid chain: Large ribosomal subunit protein uL2 (277 aa).

The segment at 225 to 277 is disordered; sequence MNPVDHPHGGGEGKTSGGRNSVTPWGVPTKGKKTRKRGKHSDKYIKVSSVRKR. Over residues 254 to 264 the composition is skewed to basic residues; that stretch reads KGKKTRKRGKH.

Belongs to the universal ribosomal protein uL2 family. In terms of assembly, part of the 50S ribosomal subunit. Forms a bridge to the 30S subunit in the 70S ribosome.

Its function is as follows. One of the primary rRNA binding proteins. Required for association of the 30S and 50S subunits to form the 70S ribosome, for tRNA binding and peptide bond formation. It has been suggested to have peptidyltransferase activity; this is somewhat controversial. Makes several contacts with the 16S rRNA in the 70S ribosome. This is Large ribosomal subunit protein uL2 from Anaplasma marginale (strain Florida).